Here is a 61-residue protein sequence, read N- to C-terminus: UPF0434 protein PSEEN1604 (61 aa).

It belongs to the UPF0434 family.

The chain is UPF0434 protein PSEEN1604 from Pseudomonas entomophila (strain L48).